Here is a 780-residue protein sequence, read N- to C-terminus: Tricorn protease-interacting factor F3 (780 aa).

Substrate-binding positions include E101 and 230–234; that span reads GAMEN. Residue H265 coordinates Zn(2+). E266 serves as the catalytic Proton acceptor. Residues H269 and E288 each contribute to the Zn(2+) site.

This sequence belongs to the peptidase M1 family. Part of the tricorn proteolytic complex. Requires Zn(2+) as cofactor.

Its subcellular location is the cytoplasm. Proteases F1, F2 and F3 degrade oligopeptides produced by Tricorn (themselves probably produced by the proteasome), yielding free amino acids. In Thermoplasma acidophilum (strain ATCC 25905 / DSM 1728 / JCM 9062 / NBRC 15155 / AMRC-C165), this protein is Tricorn protease-interacting factor F3 (trf3).